A 57-amino-acid chain; its full sequence is Ribosome modulation factor 2 (57 aa).

Positions 1-24 (MKRQKRDKLGRAHSNGYQAGLGGK) are disordered.

This sequence belongs to the ribosome modulation factor family.

It localises to the cytoplasm. Its function is as follows. During stationary phase, converts 70S ribosomes to an inactive dimeric form (100S ribosomes). This chain is Ribosome modulation factor 2, found in Colwellia psychrerythraea (strain 34H / ATCC BAA-681) (Vibrio psychroerythus).